The following is a 1285-amino-acid chain: MSCIDRMSIMGIRSFDNRSRESIQFFSPLTLIVGQNGSGKTTIIECLKYATTGILPPNTKGGAFIHDPKICGEKEVLAQVKLAFRNTNQVKMICTRSLQLSVKKTTRQQKTLDGQLLILKDNERTTISNRCAELDSQVPLSLGVSKALLDYVIFCHQEESFWPLSEPANLKKRFDEIFESLRYAKALDQIKGLKRDQETQVKVDQATLTHYRSDKERAEKIELRVHESLKRISCIRSKVEELDQEITETARLQDELFKSTEEYEQQMITIRHLESQSDIINTTINDLKSQMTITDESSEDLEKLHSNFAEKVKEEQELYKSLEKKRSDLESLLKSRRELLEKLTGDLGKIQGEIESLEKLKVKKSTMINEIVHRYNINEINEEGIMTEVSKYASLVNKNYEISSGKLKERQVAVRARIEGIKAHEMFLNNRVSEINSSLEKQLTTQKELRSRFEILFPVKLQREDFTKDVEKSDLWIKSLRQEYESKNLLELLDKHQTALSSVENRLDEISEIVDSYHKYSGVRTKLQVFEENKTNKSAILANQLMTLKSSFSEVMSYELKDDDNYNEELDKLVEDVRKKLQEKEEAESSLRSVRERLEIRISLSVQSINDLTENKKIKTKTLKSYSGTFASMISEIKALESEIEENRKTLHSLQFGSTFYEKAIEICVDQHACQLCQRSLDKEEEKLFVEHCHSMIDVIPSKSAEVYSHLETLTKTFKNLSEAKPIFDEIELLDKRLSETKTELSDLQGDLQGLDIRKDEIQSELDTLYLRRANLEKLQLLVKDISNLEEEIRTIDRETEVLRIELPSSIAHHNLDEIYAEREKLLEKRGYLRKQIERTKLEETSFKKKIDDAVLANNEQKLKLTKLNFQVNELEQLEKDINKSSEDCDLQKKKLLEVSSKQGSQAPFLNELESEYEKLEADIQEMAQKSRTEILEANEYLHQLNEWNSELRIDVSTKFKCIKEKKSNIGEEVRIIASKIESTDDNLRKLQERLADLRTRERNASDNLRLRALMRQLEEAVTQKNYLLSQQSHDDRESFRERMQILKSKYGALNAERAGLLGECKQLENSITKDKEELNMEFKDADERFRRQLIKTKTTGKANEDLGKYAKALDVAIMQLHSMKMNEINRIVDELWKQTYCGTDIDTILIRSDSEGKGNRTYNYRVCMVKGDAELDMRGRCSAGQKVLACIIIRLALAECLGVNCGILALDEPTTNLDEENICSLAKNLSRIVEFRRKQANFQLIVITHDEQFIRLVNSDAYCSYYYRVKRDTNQKSMIVKEPL.

Positions 13, 36, 37, 39, 40, 41, 42, 65, 67, and 157 each coordinate ATP. A Mg(2+)-binding site is contributed by Thr41. Gln157 serves as a coordination point for Mg(2+). Coiled-coil stretches lie at residues 295–365 (DESS…VKKS) and 630–668 (FASM…IEIC). The Zinc-hook domain maps to 630 to 726 (FASMISEIKA…TFKNLSEAKP (97 aa)). Zn(2+) is bound by residues Cys674 and Cys677. Coiled-coil stretches lie at residues 698 to 726 (DVIP…EAKP), 727 to 809 (IFDE…ELPS), and 814 to 902 (HNLD…VSSK).

The protein belongs to the SMC family. RAD50 subfamily. As to quaternary structure, forms a multisubunit endonuclease complex, MRN, together with nbn and rad32. Interacts with the rad21 cohesin complex. The cofactor is Zn(2+).

The protein resides in the nucleus. It is found in the chromosome. The catalysed reaction is ATP + H2O = ADP + phosphate + H(+). Component of the MRN complex, which plays a central role in double-strand break (DSB) repair, DNA recombination, maintenance of telomere integrity and meiosis. The MRN complex is involved in the repair of DNA double-strand breaks (DSBs) via homologous recombination (HR), an error-free mechanism which primarily occurs during S and G2 phases. The complex (1) mediates the end resection of damaged DNA, which generates proper single-stranded DNA, a key initial steps in HR, and is (2) required for the recruitment of other repair factors and efficient activation of TEL1/ATM and ATR upon DNA damage. The MRN complex possesses single-strand endonuclease activity and double-strand-specific 3'-5' exonuclease activity, which are provided by MRE11, to initiate end resection, which is required for single-strand invasion and recombination. Within the complex, rad50 is both required to bind DNA ends and hold them in close proximity and regulate the activity of rad32. Rad50 provides an ATP-dependent control of rad32 by positioning DNA ends into the rad32 active site: ATP-binding induces a large structural change from an open form with accessible rad32 nuclease sites into a closed form. This Schizosaccharomyces pombe (strain 972 / ATCC 24843) (Fission yeast) protein is DNA repair protein rad50 (rad50).